The sequence spans 209 residues: Probable GTP-binding protein EngB (209 aa).

The region spanning 24-198 is the EngB-type G domain; it reads EGMEVAFAGR…HGILDQWLGL (175 aa). GTP is bound by residues 32 to 39, 59 to 63, 77 to 80, 144 to 147, and 177 to 179; these read GRSNAGKS, GRTQL, DLPG, TKAD, and FSA. The Mg(2+) site is built by Ser-39 and Thr-61.

It belongs to the TRAFAC class TrmE-Era-EngA-EngB-Septin-like GTPase superfamily. EngB GTPase family. Mg(2+) serves as cofactor.

Necessary for normal cell division and for the maintenance of normal septation. The polypeptide is Probable GTP-binding protein EngB (Thioalkalivibrio sulfidiphilus (strain HL-EbGR7)).